Reading from the N-terminus, the 196-residue chain is Auxin-induced protein 22B (196 aa).

An EAR-like (transcriptional repression) motif is present at residues 18-22 (LRLGL). Positions 44 to 74 (RQVRETSQDSVSISKASHHQQHVETVSAPPP) are disordered. The PB1 domain maps to 99–186 (GIFVKVSMDG…SCKRLRIMKG (88 aa)).

It belongs to the Aux/IAA family. In terms of assembly, homodimers and heterodimers.

It localises to the nucleus. Aux/IAA proteins are short-lived transcriptional factors that function as repressors of early auxin response genes at low auxin concentrations. Repression is thought to result from the interaction with auxin response factors (ARFs), proteins that bind to the auxin-responsive promoter element (AuxRE). Formation of heterodimers with ARF proteins may alter their ability to modulate early auxin response genes expression. This chain is Auxin-induced protein 22B (AUX22B), found in Vigna radiata var. radiata (Mung bean).